Reading from the N-terminus, the 604-residue chain is Glutamine--fructose-6-phosphate aminotransferase [isomerizing] (604 aa).

Cysteine 2 acts as the Nucleophile; for GATase activity in catalysis. In terms of domain architecture, Glutamine amidotransferase type-2 spans cysteine 2–glutamine 219. SIS domains are found at residues leucine 279–alanine 427 and leucine 454–proline 594. The active-site For Fru-6P isomerization activity is the lysine 599.

In terms of assembly, homodimer.

It is found in the cytoplasm. It carries out the reaction D-fructose 6-phosphate + L-glutamine = D-glucosamine 6-phosphate + L-glutamate. Functionally, catalyzes the first step in hexosamine metabolism, converting fructose-6P into glucosamine-6P using glutamine as a nitrogen source. This Legionella pneumophila subsp. pneumophila (strain Philadelphia 1 / ATCC 33152 / DSM 7513) protein is Glutamine--fructose-6-phosphate aminotransferase [isomerizing].